A 767-amino-acid chain; its full sequence is Probable NADP-dependent malic enzyme (767 aa).

The malic enzyme stretch occupies residues 1–430 (MDEMNKINYT…QLGSRLNPTA (430 aa)). Catalysis depends on Tyr42, which acts as the Proton donor. The active-site Proton acceptor is the Lys97. A divalent metal cation is bound by residues Glu139, Asp140, and Asp165. NADP(+)-binding positions include 198–201 (AGAA), Asn290, and Asn322. The phosphate acetyltransferase stretch occupies residues 431–767 (NYMNFLAEKI…FACVEAIKEV (337 aa)).

The protein in the N-terminal section; belongs to the malic enzymes family. It in the C-terminal section; belongs to the phosphate acetyltransferase and butyryltransferase family. Mg(2+) serves as cofactor. It depends on Mn(2+) as a cofactor.

The enzyme catalyses (S)-malate + NADP(+) = pyruvate + CO2 + NADPH. It catalyses the reaction oxaloacetate + H(+) = pyruvate + CO2. In Rickettsia prowazekii (strain Madrid E), this protein is Probable NADP-dependent malic enzyme.